We begin with the raw amino-acid sequence, 152 residues long: Putative aluminum-activated malate transporter 11 (152 aa).

The next 2 helical transmembrane spans lie at 48-68 (VIHAFKVGHSLTLVSLLYFME) and 78-98 (AIWAVMTVVAVLLEFFAVEGL).

It belongs to the aromatic acid exporter (TC 2.A.85) family.

Its subcellular location is the membrane. Its function is as follows. Malate transporter. This is Putative aluminum-activated malate transporter 11 (ALMT11) from Arabidopsis thaliana (Mouse-ear cress).